The chain runs to 228 residues: ATP-dependent dethiobiotin synthetase BioD (228 aa).

Position 12–17 (12–17) interacts with ATP; the sequence is DVGKTY. Thr16 lines the Mg(2+) pocket. Lys37 is a catalytic residue. ATP contacts are provided by residues Asp53, 114–117, 174–175, 203–205, and Asn210; these read EGMG, ND, and PFI. Mg(2+) is bound by residues Asp53 and Glu114.

It belongs to the dethiobiotin synthetase family. Homodimer. Mg(2+) serves as cofactor.

Its subcellular location is the cytoplasm. It catalyses the reaction (7R,8S)-7,8-diammoniononanoate + CO2 + ATP = (4R,5S)-dethiobiotin + ADP + phosphate + 3 H(+). Its pathway is cofactor biosynthesis; biotin biosynthesis; biotin from 7,8-diaminononanoate: step 1/2. Catalyzes a mechanistically unusual reaction, the ATP-dependent insertion of CO2 between the N7 and N8 nitrogen atoms of 7,8-diaminopelargonic acid (DAPA, also called 7,8-diammoniononanoate) to form a ureido ring. The polypeptide is ATP-dependent dethiobiotin synthetase BioD (Nitrosopumilus maritimus (strain SCM1)).